The following is a 721-amino-acid chain: Long-chain-fatty-acid--CoA ligase ACSBG1 (721 aa).

The segment at 1 to 64 (MPRSSEAGYC…SHGLELSAPE (64 aa)) is disordered. Residues 26–43 (QQGASMGTSPDNSQTSSL) are compositionally biased toward polar residues. 4 positions are modified to phosphoserine: serine 34, serine 50, serine 53, and serine 70. Residues 279–287 (TSGTTGNPK), 469–474 (AGYGLS), aspartate 547, and arginine 562 each bind ATP. Tyrosine 655 is subject to Phosphotyrosine. Residue lysine 698 coordinates ATP.

This sequence belongs to the ATP-dependent AMP-binding enzyme family. Bubblegum subfamily. Present in testis, at a lower level in brain, and at a very low level in ovary. Not detected in other tissues. tested. Present in Leydig cells of the adult testis and to a lesser degree in the seminiferous tubules in spermatogonia and Sertoli cells (at protein level).

The protein resides in the cytoplasm. It localises to the cytoplasmic vesicle. The protein localises to the microsome. Its subcellular location is the endoplasmic reticulum. It is found in the cell membrane. It catalyses the reaction a long-chain fatty acid + ATP + CoA = a long-chain fatty acyl-CoA + AMP + diphosphate. The enzyme catalyses (E)-hexadec-2-enoate + ATP + CoA = (2E)-hexadecenoyl-CoA + AMP + diphosphate. It carries out the reaction hexadecanoate + ATP + CoA = hexadecanoyl-CoA + AMP + diphosphate. Its function is as follows. Catalyzes the conversion of fatty acids such as long-chain and very long-chain fatty acids to their active form acyl-CoAs for both synthesis of cellular lipids, and degradation via beta-oxidation. Can activate diverse saturated, monosaturated and polyunsaturated fatty acids. This is Long-chain-fatty-acid--CoA ligase ACSBG1 from Rattus norvegicus (Rat).